Reading from the N-terminus, the 187-residue chain is Putative glutathione-dependent formaldehyde-activating enzyme (187 aa).

A CENP-V/GFA domain is found at F20–D166. The Zn(2+) site is built by C27, C29, C48, C50, C53, C95, and C98.

Belongs to the Gfa family. Zn(2+) is required as a cofactor.

It catalyses the reaction S-(hydroxymethyl)glutathione = glutathione + formaldehyde. The protein operates within one-carbon metabolism; formaldehyde degradation; formate from formaldehyde (glutathione route): step 1/3. Catalyzes the condensation of formaldehyde and glutathione to S-hydroxymethylglutathione. The protein is Putative glutathione-dependent formaldehyde-activating enzyme of Verticillium alfalfae (strain VaMs.102 / ATCC MYA-4576 / FGSC 10136) (Verticillium wilt of alfalfa).